The chain runs to 328 residues: tRNA dimethylallyltransferase (328 aa).

25–32 serves as a coordination point for ATP; sequence GPTAVGKT. Residue 27–32 coordinates substrate; sequence TAVGKT. An interaction with substrate tRNA region spans residues 50 to 53; sequence DSMQ.

This sequence belongs to the IPP transferase family. As to quaternary structure, monomer. The cofactor is Mg(2+).

The catalysed reaction is adenosine(37) in tRNA + dimethylallyl diphosphate = N(6)-dimethylallyladenosine(37) in tRNA + diphosphate. In terms of biological role, catalyzes the transfer of a dimethylallyl group onto the adenine at position 37 in tRNAs that read codons beginning with uridine, leading to the formation of N6-(dimethylallyl)adenosine (i(6)A). In Halothermothrix orenii (strain H 168 / OCM 544 / DSM 9562), this protein is tRNA dimethylallyltransferase.